An 87-amino-acid chain; its full sequence is Small ribosomal subunit protein bS21 (87 aa).

The span at 47-63 (YEKPSEKRARQKAEAVR) shows a compositional bias: basic and acidic residues. The segment at 47–87 (YEKPSEKRARQKAEAVRRARKLARKRAQREGLLPMPKKPGR) is disordered. The span at 64 to 73 (RARKLARKRA) shows a compositional bias: basic residues.

Belongs to the bacterial ribosomal protein bS21 family.

This is Small ribosomal subunit protein bS21 from Caulobacter vibrioides (strain ATCC 19089 / CIP 103742 / CB 15) (Caulobacter crescentus).